Consider the following 151-residue polypeptide: 3-hydroxyacyl-[acyl-carrier-protein] dehydratase FabZ (151 aa).

His-54 is a catalytic residue.

It belongs to the thioester dehydratase family. FabZ subfamily. As to quaternary structure, oligomer. The N-terminus is blocked.

The protein localises to the cytoplasm. It carries out the reaction a (3R)-hydroxyacyl-[ACP] = a (2E)-enoyl-[ACP] + H2O. Involved in unsaturated fatty acids biosynthesis. Catalyzes the dehydration of short chain beta-hydroxyacyl-ACPs and long chain saturated and unsaturated beta-hydroxyacyl-ACPs. The protein is 3-hydroxyacyl-[acyl-carrier-protein] dehydratase FabZ of Escherichia coli (strain SE11).